The primary structure comprises 172 residues: 3-hydroxydecanoyl-[acyl-carrier-protein] dehydratase (172 aa).

The active site involves His71.

Belongs to the thioester dehydratase family. FabA subfamily. In terms of assembly, homodimer.

The protein resides in the cytoplasm. It carries out the reaction a (3R)-hydroxyacyl-[ACP] = a (2E)-enoyl-[ACP] + H2O. It catalyses the reaction (3R)-hydroxydecanoyl-[ACP] = (2E)-decenoyl-[ACP] + H2O. The catalysed reaction is (2E)-decenoyl-[ACP] = (3Z)-decenoyl-[ACP]. It participates in lipid metabolism; fatty acid biosynthesis. Functionally, necessary for the introduction of cis unsaturation into fatty acids. Catalyzes the dehydration of (3R)-3-hydroxydecanoyl-ACP to E-(2)-decenoyl-ACP and then its isomerization to Z-(3)-decenoyl-ACP. Can catalyze the dehydratase reaction for beta-hydroxyacyl-ACPs with saturated chain lengths up to 16:0, being most active on intermediate chain length. The sequence is that of 3-hydroxydecanoyl-[acyl-carrier-protein] dehydratase from Escherichia fergusonii (strain ATCC 35469 / DSM 13698 / CCUG 18766 / IAM 14443 / JCM 21226 / LMG 7866 / NBRC 102419 / NCTC 12128 / CDC 0568-73).